The following is a 290-amino-acid chain: Feruloyl esterase D (290 aa).

A signal peptide spans 1 to 25; sequence MAGLHSRLTTFLLLLLSALPAIAAA. Residues 260–280 form a disordered region; it reads HGGDHNPSQRDPGQNDPFAPR.

The protein belongs to the serine esterase family.

Its subcellular location is the secreted. The catalysed reaction is feruloyl-polysaccharide + H2O = ferulate + polysaccharide.. Involved in degradation of plant cell walls. Hydrolyzes the feruloyl-arabinose ester bond in arabinoxylans as well as the feruloyl-galactose and feruloyl-arabinose ester bonds in pectin. Active against methyl esters of ferulate (MFA), sinapate (MSA), caffeate (MCA) and p-coumarate (MpCA). In Neurospora crassa (strain ATCC 24698 / 74-OR23-1A / CBS 708.71 / DSM 1257 / FGSC 987), this protein is Feruloyl esterase D.